The following is a 79-amino-acid chain: MKEQIFDIIETVSGTDEFREDLDMDLFEEGILDSMRAIMLIVELEGAFDISLPPSEMDREDWNTANKIAARVQEKKDEN.

A Carrier domain is found at 1-76 (MKEQIFDIIE…KIAARVQEKK (76 aa)). O-(pantetheine 4'-phosphoryl)serine is present on serine 34.

Belongs to the DltC family. In terms of processing, 4'-phosphopantetheine is transferred from CoA to a specific serine of apo-DCP.

It localises to the cytoplasm. The protein operates within cell wall biogenesis; lipoteichoic acid biosynthesis. Carrier protein involved in the D-alanylation of lipoteichoic acid (LTA). The loading of thioester-linked D-alanine onto DltC is catalyzed by D-alanine--D-alanyl carrier protein ligase DltA. The DltC-carried D-alanyl group is further transferred to cell membrane phosphatidylglycerol (PG) by forming an ester bond, probably catalyzed by DltD. D-alanylation of LTA plays an important role in modulating the properties of the cell wall in Gram-positive bacteria, influencing the net charge of the cell wall. The chain is D-alanyl carrier protein from Lactococcus lactis subsp. lactis (strain IL1403) (Streptococcus lactis).